A 283-amino-acid chain; its full sequence is MPIILENVSFFYSKNTPLETAALKDVNLRIEKGEFVGILGEKGAGKSTLIKLFNGLLRPESGKVTVDGLSPFSKEVKRKVGMLFQQAADQLFCRTVHEEIAFGPRNFGYSKKETEERVFEALEAVSFDRSMLLRDPFSLSGGEMQRVALAGALALRPDYLVLDEPITGLDPAGKKEILETLKKIKDQGTAVITVTHNLKGFFPLLEKIVLVREGRISFQGSREEYLEAKNVPLPPVTSMMRELKARGLPVNPAIFTVEEALEEILRVKSRLEKEKTEKWSETD.

The 236-residue stretch at 3–238 (IILENVSFFY…KNVPLPPVTS (236 aa)) folds into the ABC transporter domain. 40 to 47 (GEKGAGKS) serves as a coordination point for ATP.

Belongs to the ABC transporter superfamily.

It localises to the cell membrane. In terms of biological role, probably part of an ABC transporter complex. Responsible for energy coupling to the transport system. The sequence is that of Putative ABC transporter ATP-binding protein MA_4342 from Methanosarcina acetivorans (strain ATCC 35395 / DSM 2834 / JCM 12185 / C2A).